The following is an 83-amino-acid chain: Small ribosomal subunit protein bS16 (83 aa).

It belongs to the bacterial ribosomal protein bS16 family.

The protein is Small ribosomal subunit protein bS16 of Albidiferax ferrireducens (strain ATCC BAA-621 / DSM 15236 / T118) (Rhodoferax ferrireducens).